We begin with the raw amino-acid sequence, 299 residues long: MSIAQQLMDMGFPADKAEAAAGNNRNLDQALDWIEKDGAGVPMETDAPAQAAPGAADSGAPPVAASFKCDDCGKLLANDDAIMFHASKTKHENFSESSEAIKPLTAEEKAAKVLEIREKIKVHQAKKAKLEAEENREKEKKRREDGKAMISHKEAARDREIREAAQDRRREKNEDEIARKRVLEQIRLDKEARKAKASGQPVPEAKPAPSAAPVAPPKDYSTTTLQFRLLDGQTVRQQFEANEPLAMVRAWVETNHANGVPFTLMTPFPRKVFTEDDMGTPLKVLNLVPSANVILNRAA.

Disordered stretches follow at residues 39–61 (AGVP…SGAP), 127–176 (KAKL…NEDE), and 191–218 (EARK…APPK). Residues 46–61 (DAPAQAAPGAADSGAP) are compositionally biased toward low complexity. Positions 111–179 (AKVLEIREKI…REKNEDEIAR (69 aa)) form a coiled coil. Basic and acidic residues predominate over residues 128-176 (AKLEAEENREKEKKRREDGKAMISHKEAARDREIREAAQDRRREKNEDE). The span at 201 to 213 (PVPEAKPAPSAAP) shows a compositional bias: low complexity. A UBX domain is found at 218–295 (KDYSTTTLQF…NLVPSANVIL (78 aa)).

Interacts with cdc-48.1 (via N-terminus) and cdc-48.2 (via N-terminus) in vitro; the interaction with cdc-48.1 is not detected in vivo. In terms of tissue distribution, expressed in the germline (at protein level). Expressed in spermatocytes but not in mature sperm (at protein level). Ubiquitously expressed. Predominantly expressed in the spermatheca.

It is found in the cytoplasm. The protein resides in the perinuclear region. Functionally, ubiquitin-binding protein which acts as an adapter for ATPase cdc-48.1 and/or cdc-48.2, conferring substrate specificity. Together with ubxn-2 and ubxn-3, plays a role in hermaphrodite spermatogenesis probably by promoting the degradation of sex determination terminal factor tra-1. The protein is UBX domain-containing protein 1 of Caenorhabditis elegans.